Consider the following 224-residue polypeptide: Holliday junction branch migration complex subunit RuvA (224 aa).

The domain I stretch occupies residues 1–64; that stretch reads MIGRLSGVLV…EDLLQLYGFP (64 aa). The interval 65 to 143 is domain II; sequence TLLEKEWHRL…EVMAMGGTLE (79 aa). A flexible linker region spans residues 144–171; the sequence is AALDGVIEDGMAASEGIEPPSAARPAVP. The domain III stretch occupies residues 172–224; that stretch reads SAASDQAGALSALVNLGYGQGEAASAVATAAGEGAVGETDIIRAALRLLAPKG.

This sequence belongs to the RuvA family. Homotetramer. Forms an RuvA(8)-RuvB(12)-Holliday junction (HJ) complex. HJ DNA is sandwiched between 2 RuvA tetramers; dsDNA enters through RuvA and exits via RuvB. An RuvB hexamer assembles on each DNA strand where it exits the tetramer. Each RuvB hexamer is contacted by two RuvA subunits (via domain III) on 2 adjacent RuvB subunits; this complex drives branch migration. In the full resolvosome a probable DNA-RuvA(4)-RuvB(12)-RuvC(2) complex forms which resolves the HJ.

The protein localises to the cytoplasm. The RuvA-RuvB-RuvC complex processes Holliday junction (HJ) DNA during genetic recombination and DNA repair, while the RuvA-RuvB complex plays an important role in the rescue of blocked DNA replication forks via replication fork reversal (RFR). RuvA specifically binds to HJ cruciform DNA, conferring on it an open structure. The RuvB hexamer acts as an ATP-dependent pump, pulling dsDNA into and through the RuvAB complex. HJ branch migration allows RuvC to scan DNA until it finds its consensus sequence, where it cleaves and resolves the cruciform DNA. The polypeptide is Holliday junction branch migration complex subunit RuvA (Dinoroseobacter shibae (strain DSM 16493 / NCIMB 14021 / DFL 12)).